A 223-amino-acid chain; its full sequence is Noggin (223 aa).

The first 26 residues, 1-26, serve as a signal peptide directing secretion; the sequence is MDPPRLRVATYLLLLSVGLLLHGGAC. Asn-61 carries N-linked (GlcNAc...) asparagine glycosylation. 4 disulfide bridges follow: Cys-143–Cys-180, Cys-166–Cys-217, Cys-172–Cys-219, and Cys-195–Cys-204.

Belongs to the noggin family. Homodimer.

The protein resides in the secreted. Its function is as follows. Inhibitor of bone morphogenetic proteins (BMP) signaling. The chain is Noggin (nog) from Takifugu rubripes (Japanese pufferfish).